The primary structure comprises 289 residues: Oxaloacetate decarboxylase (289 aa).

Serine 47 contacts substrate. Aspartate 85 is a Mg(2+) binding site. Substrate contacts are provided by arginine 156 and histidine 232.

Belongs to the isocitrate lyase/PEP mutase superfamily. Oxaloacetate decarboxylase family. Homotetramer; dimer of dimers. Mg(2+) serves as cofactor.

The catalysed reaction is oxaloacetate + H(+) = pyruvate + CO2. Its function is as follows. Catalyzes the decarboxylation of oxaloacetate into pyruvate. Seems to play a role in maintaining cellular concentrations of bicarbonate and pyruvate. This is Oxaloacetate decarboxylase from Rhodopseudomonas palustris (strain BisB5).